We begin with the raw amino-acid sequence, 482 residues long: Transcription initiation factor IIE subunit alpha (482 aa).

The HTH TFE/IIEalpha-type domain maps to 9–99; it reads VKNLLKFVVR…KYPHAIDAIK (91 aa). The C4-type zinc finger occupies 124-152; it reads CPICLTKYTQLEAVQLLNFDRTEFLCSLC. The span at 274 to 286 shows a compositional bias: basic and acidic residues; sequence RELQERQAEEKRK. 2 disordered regions span residues 274 to 295 and 321 to 482; these read RELQERQAEEKRKQNAVPEWHK and AMDS…FEDV. The segment covering 321–345 has biased composition (polar residues); it reads AMDSINPDNEPAQETSYQNNRTLTE. A compositionally biased stretch (acidic residues) spans 374–401; sequence EEEEEEEEEEDEEEEEEEEMEDVMDDND. Residues 419-432 are compositionally biased toward polar residues; that stretch reads TAGTAKTESNTSND. The segment covering 433–444 has biased composition (basic and acidic residues); the sequence is VKQESINDKTED. Residues 464–482 show a composition bias toward acidic residues; sequence GDDDDDDDDDEMDIEFEDV.

Belongs to the TFIIE alpha subunit family. In terms of assembly, TFIIE is a tetramer of two alpha (TFA1) and two beta (TFA2) subunits.

Its subcellular location is the nucleus. In terms of biological role, recruits TFIIH to the initiation complex and stimulates the RNA polymerase II C-terminal domain kinase and DNA-dependent ATPase activities of TFIIH. Both TFIIH and TFIIE are required for promoter clearance by RNA polymerase. This chain is Transcription initiation factor IIE subunit alpha (TFA1), found in Saccharomyces cerevisiae (strain ATCC 204508 / S288c) (Baker's yeast).